The following is a 258-amino-acid chain: UPF0246 protein LHK_02295 (258 aa).

The protein belongs to the UPF0246 family.

This is UPF0246 protein LHK_02295 from Laribacter hongkongensis (strain HLHK9).